Consider the following 340-residue polypeptide: DNA-directed RNA polymerase subunit alpha (340 aa).

Residues 1-233 (MYRNWRDLIS…EQLSIFINFD (233 aa)) form an alpha N-terminal domain (alpha-NTD) region. The tract at residues 251 to 340 (INENLYRSVD…RLRGERKDEE (90 aa)) is alpha C-terminal domain (alpha-CTD).

The protein belongs to the RNA polymerase alpha chain family. In terms of assembly, homodimer. The RNAP catalytic core consists of 2 alpha, 1 beta, 1 beta' and 1 omega subunit. When a sigma factor is associated with the core the holoenzyme is formed, which can initiate transcription.

It catalyses the reaction RNA(n) + a ribonucleoside 5'-triphosphate = RNA(n+1) + diphosphate. DNA-dependent RNA polymerase catalyzes the transcription of DNA into RNA using the four ribonucleoside triphosphates as substrates. The protein is DNA-directed RNA polymerase subunit alpha of Geobacter sulfurreducens (strain ATCC 51573 / DSM 12127 / PCA).